The chain runs to 1528 residues: 5'-3' exoribonuclease 1 (1528 aa).

3 disordered regions span residues 1246-1331, 1431-1455, and 1470-1528; these read SKKA…KSSE, PPPA…NVSD, and LKKF…DEST. The segment covering 1274 to 1304 has biased composition (basic and acidic residues); that stretch reads QSEEKLRKERAHDLLNFIKKDTNEKNSESVD. Over residues 1317 to 1326 the composition is skewed to basic residues; sequence AKKVLLKRPA. Residues 1500–1517 are compositionally biased toward polar residues; that stretch reads SSGTNSTECQSPKSQSNA. The residue at position 1506 (Thr-1506) is a Phosphothreonine. Position 1510 is a phosphoserine (Ser-1510). Over residues 1518-1528 the composition is skewed to basic and acidic residues; it reads ADRDNKKDEST.

Belongs to the 5'-3' exonuclease family. Requires Mg(2+) as cofactor.

Its subcellular location is the cytoplasm. The protein localises to the perinuclear region. It localises to the P-body. With respect to regulation, 3'-phosphoadenosine 5'-phosphate (pAp) is an inhibitor of KEM1. Sodium-induced GCN4 expression reduces pAp accumulation by activating HAL2 expression, and therefore maintains mRNA degradation capacity which is likely to be important for the accurate and rapid adaptation of gene expression to salt stress. In terms of biological role, multifunctional protein that exhibits several independent functions at different levels of the cellular processes. 5'-3' exonuclease component of the nonsense-mediated mRNA decay (NMD) which is a highly conserved mRNA degradation pathway, an RNA surveillance system whose role is to identify and rid cells of mRNA with premature termination codons and thus prevents accumulation of potentially harmful truncated proteins. The NMD pathway has a second role regulating the decay of wild-type mRNAs, and especially mRNAs that are important for telomere functions. Participate in CTH2-mediated and VTS1-mediated mRNA turnover. Involved in the degradation of several hypomodified mature tRNA species and participates in the 5'-processing or the degradation of the snoRNA precursors and rRNA processing. Involved in defense against virus and suppresses viral RNA recombination by rapidly removing the 5'-truncated RNAs, the substrates of recombination, and thus reducing the chance for recombination to occur in the parental strain. Required for the assembly of the virus-like particles of the Ty3 retrotransposon and contributes to the efficient generation of narnavirus 20S RNA by playing a major role in the elimination of the non-viral upstream sequences from the primary transcripts. Degrades single-stranded DNA (ss-DNA) and can renature complementary ss-DNA as well as catalyzes the formation of heteroduplex DNA from circular ss-DNA and homologous linear ds-DNA in vitro. Acts as a microtubule-associated protein which interacts with cytoplasmic microtubules through beta-tubulin and promotes in vitro assembly of tubulin into microtubules. Associates with microtubule functions such as chromosome transmission, nuclear migration, and SPB duplication. Has also a role in G1 to S transition and is involved in nuclear fusion during karyogamy. Required for the expression of ROK1 at the post-transcriptional level and for the alpha-factor induction of the karyogamy genes KAR3 and KAR4. Plays a role in filamentous growth. This is 5'-3' exoribonuclease 1 (XRN1) from Saccharomyces cerevisiae (strain ATCC 204508 / S288c) (Baker's yeast).